Consider the following 322-residue polypeptide: Undecaprenyl-phosphate 4-deoxy-4-formamido-L-arabinose transferase (322 aa).

Residues 1–235 are Cytoplasmic-facing; it reads MFEIHPVKKV…TCLTTTPLRM (235 aa). The helical transmembrane segment at 236–256 threads the bilayer; it reads LSLLGSIIAIGGFSIAVLLVI. Topologically, residues 257 to 269 are periplasmic; it reads LRLTFGPQWAAEG. Residues 270-290 form a helical membrane-spanning segment; the sequence is VFMLFAVLFTFIGAQFIGMGL. Residues 291 to 322 lie on the Cytoplasmic side of the membrane; that stretch reads LGEYIGRIYTDVRARPRYFVQQVIRPSSKENE.

The protein belongs to the glycosyltransferase 2 family.

The protein resides in the cell inner membrane. It catalyses the reaction UDP-4-deoxy-4-formamido-beta-L-arabinose + di-trans,octa-cis-undecaprenyl phosphate = 4-deoxy-4-formamido-alpha-L-arabinopyranosyl di-trans,octa-cis-undecaprenyl phosphate + UDP. The protein operates within glycolipid biosynthesis; 4-amino-4-deoxy-alpha-L-arabinose undecaprenyl phosphate biosynthesis; 4-amino-4-deoxy-alpha-L-arabinose undecaprenyl phosphate from UDP-4-deoxy-4-formamido-beta-L-arabinose and undecaprenyl phosphate: step 1/2. It participates in bacterial outer membrane biogenesis; lipopolysaccharide biosynthesis. Functionally, catalyzes the transfer of 4-deoxy-4-formamido-L-arabinose from UDP to undecaprenyl phosphate. The modified arabinose is attached to lipid A and is required for resistance to polymyxin and cationic antimicrobial peptides. This is Undecaprenyl-phosphate 4-deoxy-4-formamido-L-arabinose transferase from Escherichia coli O17:K52:H18 (strain UMN026 / ExPEC).